The chain runs to 161 residues: SsrA-binding protein (161 aa).

Positions 140 to 161 (KRESIKERDWKRDKQRLLKDRG) are disordered.

This sequence belongs to the SmpB family.

The protein resides in the cytoplasm. In terms of biological role, required for rescue of stalled ribosomes mediated by trans-translation. Binds to transfer-messenger RNA (tmRNA), required for stable association of tmRNA with ribosomes. tmRNA and SmpB together mimic tRNA shape, replacing the anticodon stem-loop with SmpB. tmRNA is encoded by the ssrA gene; the 2 termini fold to resemble tRNA(Ala) and it encodes a 'tag peptide', a short internal open reading frame. During trans-translation Ala-aminoacylated tmRNA acts like a tRNA, entering the A-site of stalled ribosomes, displacing the stalled mRNA. The ribosome then switches to translate the ORF on the tmRNA; the nascent peptide is terminated with the 'tag peptide' encoded by the tmRNA and targeted for degradation. The ribosome is freed to recommence translation, which seems to be the essential function of trans-translation. The protein is SsrA-binding protein of Sphingopyxis alaskensis (strain DSM 13593 / LMG 18877 / RB2256) (Sphingomonas alaskensis).